A 30-amino-acid chain; its full sequence is Ornithine carbamoyltransferase, catabolic (30 aa).

The protein belongs to the aspartate/ornithine carbamoyltransferase superfamily. OTCase family.

Its subcellular location is the cytoplasm. It catalyses the reaction carbamoyl phosphate + L-ornithine = L-citrulline + phosphate + H(+). It functions in the pathway amino-acid degradation; L-arginine degradation via ADI pathway; carbamoyl phosphate from L-arginine: step 2/2. This Aeromonas caviae (Aeromonas punctata) protein is Ornithine carbamoyltransferase, catabolic (arcB).